A 418-amino-acid chain; its full sequence is AP-3 complex subunit mu-2 (418 aa).

In terms of domain architecture, MHD spans 176–417 (NNEAYFDVIE…MTKAGKFQVR (242 aa)).

The protein belongs to the adaptor complexes medium subunit family. In terms of assembly, AP-3 associates with the BLOC-1 complex. Adaptor protein complex 3 (AP-3) is a heterotetramer composed of two large adaptins (delta-type subunit AP3D1 and beta-type subunit AP3B1 or AP3B2), a medium adaptin (mu-type subunit AP3M1 or AP3M2) and a small adaptin (sigma-type subunit APS1 or AP3S2).

Its subcellular location is the golgi apparatus. It is found in the cytoplasmic vesicle membrane. Part of the AP-3 complex, an adaptor-related complex which is not clathrin-associated. The complex is associated with the Golgi region as well as more peripheral structures. It facilitates the budding of vesicles from the Golgi membrane and may be directly involved in trafficking to lysosomes. In concert with the BLOC-1 complex, AP-3 is required to target cargos into vesicles assembled at cell bodies for delivery into neurites and nerve terminals. In Homo sapiens (Human), this protein is AP-3 complex subunit mu-2 (AP3M2).